Consider the following 175-residue polypeptide: Large ribosomal subunit protein uL6 (175 aa).

The protein belongs to the universal ribosomal protein uL6 family. Part of the 50S ribosomal subunit.

In terms of biological role, this protein binds to the 23S rRNA, and is important in its secondary structure. It is located near the subunit interface in the base of the L7/L12 stalk, and near the tRNA binding site of the peptidyltransferase center. The chain is Large ribosomal subunit protein uL6 from Xylella fastidiosa (strain M23).